Here is a 127-residue protein sequence, read N- to C-terminus: MWKPILAIALGSTLGGLLRWGLGLKLNNLFPDVPPGTLVANLIAGYVVGVAIAFFAHMPNLSPEWRLLVITGFCGGLSTFSTFSAEIVSLLQRGLYAWAMSAIAVHVAGSLIMTLAGIATVTWFKSS.

4 helical membrane passes run 4 to 24, 36 to 56, 68 to 88, and 98 to 118; these read PILAIALGSTLGGLLRWGLGL, GTLVANLIAGYVVGVAIAFFA, LVITGFCGGLSTFSTFSAEIV, and WAMSAIAVHVAGSLIMTLAGI. Gly-75 and Ser-78 together coordinate Na(+).

The protein belongs to the fluoride channel Fluc/FEX (TC 1.A.43) family.

Its subcellular location is the cell inner membrane. It catalyses the reaction fluoride(in) = fluoride(out). Na(+) is not transported, but it plays an essential structural role and its presence is essential for fluoride channel function. In terms of biological role, fluoride-specific ion channel. Important for reducing fluoride concentration in the cell, thus reducing its toxicity. This Nitrosomonas europaea (strain ATCC 19718 / CIP 103999 / KCTC 2705 / NBRC 14298) protein is Fluoride-specific ion channel FluC.